Reading from the N-terminus, the 520-residue chain is Bifunctional dihydrofolate reductase-thymidylate synthase (520 aa).

The region spanning 26 to 229 is the DHFR domain; that stretch reads AFSIVVALDM…LEFEICKYVP (204 aa). Position 30 (Val30) interacts with substrate. Residues Ala32 and 38–44 each bind NADP(+); that span reads GIGDGES. Residue Asp52 participates in substrate binding. NADP(+) is bound by residues 81–83, 102–105, and 157–164; these read RKT, LSSK, and GGAQVYAD. 2 residues coordinate substrate: Tyr162 and Thr180. The interval 234–520 is thymidylate synthase; that stretch reads ERQYLELIDR…HPAIKMEMAV (287 aa). Residue Arg254 participates in dUMP binding. Cys400 is a catalytic residue. DUMP contacts are provided by residues His401, 421 to 425, Asn433, and 463 to 465; these read QRSCD and HVY.

In the N-terminal section; belongs to the dihydrofolate reductase family. This sequence in the C-terminal section; belongs to the thymidylate synthase family.

It catalyses the reaction (6S)-5,6,7,8-tetrahydrofolate + NADP(+) = 7,8-dihydrofolate + NADPH + H(+). The enzyme catalyses dUMP + (6R)-5,10-methylene-5,6,7,8-tetrahydrofolate = 7,8-dihydrofolate + dTMP. It functions in the pathway cofactor biosynthesis; tetrahydrofolate biosynthesis; 5,6,7,8-tetrahydrofolate from 7,8-dihydrofolate: step 1/1. Functionally, bifunctional enzyme. Involved in de novo dTMP biosynthesis. Key enzyme in folate metabolism. Catalyzes an essential reaction for de novo glycine and purine synthesis, DNA precursor synthesis, and for the conversion of dUMP to dTMP. This chain is Bifunctional dihydrofolate reductase-thymidylate synthase, found in Leishmania major.